The sequence spans 243 residues: Pyridoxine 5'-phosphate synthase (243 aa).

Position 7 (N7) interacts with 3-amino-2-oxopropyl phosphate. Residue 9–10 participates in 1-deoxy-D-xylulose 5-phosphate binding; sequence DH. R18 is a binding site for 3-amino-2-oxopropyl phosphate. The active-site Proton acceptor is H43. 1-deoxy-D-xylulose 5-phosphate is bound by residues R45 and H50. Residue E70 is the Proton acceptor of the active site. Residue T100 participates in 1-deoxy-D-xylulose 5-phosphate binding. Residue H190 is the Proton donor of the active site. 3-amino-2-oxopropyl phosphate contacts are provided by residues G191 and 212-213; that span reads GH.

Belongs to the PNP synthase family. Homooctamer; tetramer of dimers.

It localises to the cytoplasm. It carries out the reaction 3-amino-2-oxopropyl phosphate + 1-deoxy-D-xylulose 5-phosphate = pyridoxine 5'-phosphate + phosphate + 2 H2O + H(+). The protein operates within cofactor biosynthesis; pyridoxine 5'-phosphate biosynthesis; pyridoxine 5'-phosphate from D-erythrose 4-phosphate: step 5/5. Its function is as follows. Catalyzes the complicated ring closure reaction between the two acyclic compounds 1-deoxy-D-xylulose-5-phosphate (DXP) and 3-amino-2-oxopropyl phosphate (1-amino-acetone-3-phosphate or AAP) to form pyridoxine 5'-phosphate (PNP) and inorganic phosphate. The sequence is that of Pyridoxine 5'-phosphate synthase from Prochlorococcus marinus (strain MIT 9211).